The sequence spans 409 residues: Mitochondrial inner membrane protein oxa1-2 (409 aa).

The chain crosses the membrane as a helical span at residues 76–96 (VVYTPSLPLSSSVLASFSFLP). The Mitochondrial intermembrane segment spans residues 97–114 (HNILQNGLNTLHIWSGLP). The helical transmembrane segment at 115 to 135 (WWASIAACAVAMRIAVFPIML) threads the bilayer. Residues 136 to 188 (KMMKTSAKLAIINPKVAEHMSVLSKAKAEGNSELMMQATTQIQNLYKVNNVNP) are Mitochondrial matrix-facing. A helical transmembrane segment spans residues 189–209 (LNLLSAPVFQGILFISFFYAL). Residues 210-235 (KTMAGVPVEGFTDGGFWWVNDLSQPD) lie on the Mitochondrial intermembrane side of the membrane. Residues 236-256 (PLHIFPVANGLLMLLNIELGS) traverse the membrane as a helical segment. At 257-275 (ETGSNKVAMSPSMKKFFRF) the chain is on the mitochondrial matrix side. Residues 276–296 (LCLASPLFTMNFPMAIFMYWF) form a helical membrane-spanning segment. The Mitochondrial intermembrane segment spans residues 297 to 409 (PSNVFSVFQG…SVTKPTEKKD (113 aa)). A disordered region spans residues 369–409 (TDTNNEQKPTNNSTITKATTLSDNSQNDKSSSVTKPTEKKD). Residues 374–403 (EQKPTNNSTITKATTLSDNSQNDKSSSVTK) are compositionally biased toward polar residues.

It belongs to the OXA1/ALB3/YidC family.

The protein resides in the mitochondrion inner membrane. Its function is as follows. Required for the insertion of integral membrane proteins into the mitochondrial inner membrane. Essential for the activity and assembly of cytochrome c oxidase. It is essential for viability while oxa101 is not. When both are deleted the cell is non-viable, suggesting that oxa101 act as a back-up for oxa102. The polypeptide is Mitochondrial inner membrane protein oxa1-2 (oxa102) (Schizosaccharomyces pombe (strain 972 / ATCC 24843) (Fission yeast)).